A 22-amino-acid chain; its full sequence is Rothein 4.1 (22 aa).

This sequence belongs to the frog skin active peptide (FSAP) family. Rothein subfamily. As to expression, expressed by the skin dorsal glands.

It is found in the secreted. Functionally, lacks antimicrobial activity. Does not inhibit the formation of NO by neuronal nitric oxide. The polypeptide is Rothein 4.1 (Litoria rothii (Roth's tree frog)).